The chain runs to 673 residues: Putative transcription factor tau subunit sfc9 (673 aa).

As to quaternary structure, may be a component of the TFIIIC complex.

The protein localises to the nucleus. This is Putative transcription factor tau subunit sfc9 from Schizosaccharomyces pombe (strain 972 / ATCC 24843) (Fission yeast).